Consider the following 399-residue polypeptide: Inositol polyphosphate 1-phosphatase (399 aa).

Asp-54 serves as a coordination point for Li(+). Residue Glu-79 participates in Mg(2+) binding. Glu-80 contributes to the Li(+) binding site. Mg(2+)-binding residues include Asp-153 and Ile-155. The 1D-myo-inositol 1,4-bisphosphate site is built by Asp-156, Ser-157, Thr-158, Ser-267, Lys-269, Gly-289, Ala-290, Lys-293, and Thr-311. Asp-316 lines the Mg(2+) pocket. Residue Ser-317 is modified to Phosphoserine.

This sequence belongs to the inositol monophosphatase superfamily. In terms of assembly, monomer. The cofactor is Mg(2+). As to expression, ubiquitously expressed, with highest levels in pancreas and kidney.

It catalyses the reaction 1D-myo-inositol 1,4-bisphosphate + H2O = 1D-myo-inositol 4-phosphate + phosphate. The catalysed reaction is 1D-myo-inositol 1,3,4-trisphosphate + H2O = 1D-myo-inositol 3,4-bisphosphate + phosphate. The protein operates within signal transduction; phosphatidylinositol signaling pathway. With respect to regulation, inhibited by Li(+). Its function is as follows. Mg(2+)-dependent phosphatase that catalyzes the hydrolysis of the 1-position phosphate from inositol 1,4-bisphosphate and inositol 1,3,4-trisphosphate and participates in inositol phosphate metabolism. In Homo sapiens (Human), this protein is Inositol polyphosphate 1-phosphatase.